The following is a 79-amino-acid chain: Small ribosomal subunit protein bS18 (79 aa).

The protein belongs to the bacterial ribosomal protein bS18 family. As to quaternary structure, part of the 30S ribosomal subunit. Forms a tight heterodimer with protein bS6.

In terms of biological role, binds as a heterodimer with protein bS6 to the central domain of the 16S rRNA, where it helps stabilize the platform of the 30S subunit. This chain is Small ribosomal subunit protein bS18, found in Streptococcus agalactiae serotype Ia (strain ATCC 27591 / A909 / CDC SS700).